The primary structure comprises 286 residues: D-tagatose-1,6-bisphosphate aldolase subunit KbaY (286 aa).

The active-site Proton donor is the aspartate 82. The Zn(2+) site is built by histidine 83 and histidine 180. Residue glycine 181 participates in dihydroxyacetone phosphate binding. Histidine 208 is a binding site for Zn(2+). Residues 209-211 (GAS) and 230-233 (NVAT) each bind dihydroxyacetone phosphate.

The protein belongs to the class II fructose-bisphosphate aldolase family. TagBP aldolase KbaY subfamily. In terms of assembly, homotetramer. Forms a complex with KbaZ. Requires Zn(2+) as cofactor.

The catalysed reaction is D-tagatofuranose 1,6-bisphosphate = D-glyceraldehyde 3-phosphate + dihydroxyacetone phosphate. Its pathway is carbohydrate metabolism; D-tagatose 6-phosphate degradation; D-glyceraldehyde 3-phosphate and glycerone phosphate from D-tagatose 6-phosphate: step 2/2. Catalytic subunit of the tagatose-1,6-bisphosphate aldolase KbaYZ, which catalyzes the reversible aldol condensation of dihydroxyacetone phosphate (DHAP or glycerone-phosphate) with glyceraldehyde 3-phosphate (G3P) to produce tagatose 1,6-bisphosphate (TBP). Requires KbaZ subunit for full activity and stability. This chain is D-tagatose-1,6-bisphosphate aldolase subunit KbaY, found in Escherichia coli O17:K52:H18 (strain UMN026 / ExPEC).